A 113-amino-acid polypeptide reads, in one-letter code: MKRRSVCVGDTVYVLAGNDKGKQGKVLSCLREKNKVVVEGINVRTKNIKRSQENPKGKRISIEAPIHVSNVRLSIEGAPAKISVKVTEKGRELWNKFPDGTSKLYRFVKERKG.

Belongs to the universal ribosomal protein uL24 family. Part of the 50S ribosomal subunit.

In terms of biological role, one of two assembly initiator proteins, it binds directly to the 5'-end of the 23S rRNA, where it nucleates assembly of the 50S subunit. Its function is as follows. One of the proteins that surrounds the polypeptide exit tunnel on the outside of the subunit. The polypeptide is Large ribosomal subunit protein uL24 (Chlamydia felis (strain Fe/C-56) (Chlamydophila felis)).